Consider the following 267-residue polypeptide: Tryptophan synthase alpha chain (267 aa).

Active-site proton acceptor residues include Glu47 and Asp58.

The protein belongs to the TrpA family. As to quaternary structure, tetramer of two alpha and two beta chains.

The enzyme catalyses (1S,2R)-1-C-(indol-3-yl)glycerol 3-phosphate + L-serine = D-glyceraldehyde 3-phosphate + L-tryptophan + H2O. Its pathway is amino-acid biosynthesis; L-tryptophan biosynthesis; L-tryptophan from chorismate: step 5/5. Its function is as follows. The alpha subunit is responsible for the aldol cleavage of indoleglycerol phosphate to indole and glyceraldehyde 3-phosphate. This is Tryptophan synthase alpha chain from Pelodictyon phaeoclathratiforme (strain DSM 5477 / BU-1).